The sequence spans 231 residues: Tol-Pal system protein TolQ (231 aa).

3 consecutive transmembrane segments (helical) span residues isoleucine 20–isoleucine 40, phenylalanine 134–isoleucine 154, and isoleucine 176–alanine 196.

The protein belongs to the ExbB/TolQ family. The Tol-Pal system is composed of five core proteins: the inner membrane proteins TolA, TolQ and TolR, the periplasmic protein TolB and the outer membrane protein Pal. They form a network linking the inner and outer membranes and the peptidoglycan layer.

Its subcellular location is the cell inner membrane. Part of the Tol-Pal system, which plays a role in outer membrane invagination during cell division and is important for maintaining outer membrane integrity. The polypeptide is Tol-Pal system protein TolQ (Pseudomonas aeruginosa (strain ATCC 15692 / DSM 22644 / CIP 104116 / JCM 14847 / LMG 12228 / 1C / PRS 101 / PAO1)).